Consider the following 331-residue polypeptide: Lactamase-like protein nscB (331 aa).

4 residues coordinate Zn(2+): His106, His108, Asp110, and His111. Asp110 functions as the Proton donor/acceptor in the catalytic mechanism.

This sequence belongs to the metallo-beta-lactamase superfamily. Zn(2+) serves as cofactor.

Its pathway is secondary metabolite biosynthesis. Lactamase-like protein; part of the gene cluster that mediates the biosynthesis of neosartoricin B, a prenylated anthracenone that probably exhibits T-cell antiproliferative activity, suggestive of a physiological role as an immunosuppressive agent. The non-reducing polyketide synthase nscA probably synthesizes and cyclizes the decaketide backbone. The hydrolase nscB then mediates the product release through hydrolysis followed by spontaneous decarboxylation. The prenyltransferase nscD catalyzes the addition of the dimethylallyl group to the aromatic C5. The FAD-dependent monooxygenase nscC is then responsible for the stereospecific hydroxylation at C2. Neosartoricin B can be converted into two additional compounds neosartoricins C and D. Neosartoricin C is a spirocyclic compound that is cyclized through the attack of C3 hydroxyl on C14, followed by dehydration. On the other hand, neosartoricin D is a further cyclized compound in which attack of C2 on C14 in neosartoricin C results in the formation of the acetal-containing dioxabicyclo-octanone ring. Both of these compounds are novel and possibly represent related metabolites of the gene cluster. This Trichophyton equinum (strain ATCC MYA-4606 / CBS 127.97) (Horse ringworm fungus) protein is Lactamase-like protein nscB.